We begin with the raw amino-acid sequence, 339 residues long: MNKTAEEIVESRRCASEGLTNALTSITVKMSSVLVVTVILLSYYFARLAIRTLWKNNIFSNSTRLILLVCLLNSIIHQTTMLEIRIRQIYRSIVFASEPCRLPFHFTECEVELFVYYLTTYFSTYSVFSLAFDRLISCYTPKYYLSHQYYVSIFLLFIQLIFTLGTYYVGLYGVPPLGYEPFCNYAPKLATNFVKINDFRTLIMGICIIVTVFVYYLSVKSEKQIQQTSYSPGERYIAYENVAASQSVCILIVLQFACILISSLGVNYLRIFKSTLSDEEYNKLAPFFVGVTYANLCLPLVIHCKTKLTIRNRKLRIGVMTSMYGDVGEHINRLKKSWE.

Transmembrane regions (helical) follow at residues 26 to 46 (ITVK…YYFA), 65 to 82 (LILL…TTML), 112 to 132 (ELFV…SLAF), 151 to 171 (VSIF…YVGL), 199 to 219 (FRTL…YLSV), 248 to 268 (VCIL…GVNY), and 284 to 304 (LAPF…VIHC).

The protein belongs to the nematode receptor-like protein sra family.

The protein localises to the membrane. The chain is Serpentine receptor class alpha-24 (sra-24) from Caenorhabditis elegans.